The chain runs to 310 residues: Glutaminase 1 (310 aa).

Residues S66, N117, E161, N168, Y192, Y244, and V262 each contribute to the substrate site. An N6-acetyllysine modification is found at K294.

Belongs to the glutaminase family. Homotetramer.

The enzyme catalyses L-glutamine + H2O = L-glutamate + NH4(+). The chain is Glutaminase 1 from Escherichia coli O6:H1 (strain CFT073 / ATCC 700928 / UPEC).